Consider the following 304-residue polypeptide: Oxygen-dependent coproporphyrinogen-III oxidase (304 aa).

Ser-94 is a binding site for substrate. The a divalent metal cation site is built by His-98 and His-108. His-108 (proton donor) is an active-site residue. Substrate is bound at residue 110-112; the sequence is NVR. The a divalent metal cation site is built by His-147 and His-177. The tract at residues 242–277 is important for dimerization; the sequence is YVEFNLVYDRGTLFGLQTGGRTESILMSMPPLVRWQ. 260 to 262 contacts substrate; it reads GGR.

This sequence belongs to the aerobic coproporphyrinogen-III oxidase family. Homodimer. A divalent metal cation serves as cofactor.

It localises to the cytoplasm. It catalyses the reaction coproporphyrinogen III + O2 + 2 H(+) = protoporphyrinogen IX + 2 CO2 + 2 H2O. The protein operates within porphyrin-containing compound metabolism; protoporphyrin-IX biosynthesis; protoporphyrinogen-IX from coproporphyrinogen-III (O2 route): step 1/1. Its function is as follows. Involved in the heme biosynthesis. Catalyzes the aerobic oxidative decarboxylation of propionate groups of rings A and B of coproporphyrinogen-III to yield the vinyl groups in protoporphyrinogen-IX. This Shewanella amazonensis (strain ATCC BAA-1098 / SB2B) protein is Oxygen-dependent coproporphyrinogen-III oxidase.